The chain runs to 73 residues: Putative antitoxin M1627_0365 (73 aa).

It belongs to the UPF0330 family.

Functionally, possibly the antitoxin component of a type II toxin-antitoxin (TA) system. The protein is Putative antitoxin M1627_0365 of Saccharolobus islandicus (strain M.16.27) (Sulfolobus islandicus).